A 395-amino-acid chain; its full sequence is MAQVQQLTPAQQAALRNQQAMAANLQARQIVLQQSYPVIQQVETQTFDPANRSVFDVTPANVGIVKGFLVKVTAAITNNHATEAVALTDFGPANLVQRVIYYDPDNQRHTETSGWHLHFVNTAKQGAPFLSSMVTDSPIKYGDVMNVIDAPATIAAGATGELTMYYWVPLAYSETDLTGAVLANVPQSKQRLKLEFANNNTAFAAVGANPLEAIYQGAGAADCEFEEISYTVYQSYLDQLPVGQNGYILPLIDLSTLYNLENSAQAGLTPNVDFVVQYANLYRYLSTIAVFDNGGSFNAGTDINYLSQRTANFSDTRKLDPKTWAAQTRRRIATDFPKGVYYCDNRDKPIYTLQYGNVGFVVNPKTVNQNARLLMGYEYFTSRTELVNAGTISTT.

Homotrimer.

The protein resides in the virion. Major capsid protein self-assembles to form an icosahedral capsid with a pseudo T=25 symmetry, about 66 nm in diameter, and consisting of 240 capsid proteins trimers. The capsid encapsulates an inner membrane and the genomic dsDNA genome. The major coat protein P3 and two assembly factors (P10 and P17) are needed during the assembly of the virus particle inside the host cell, when the capsid protein multimers are capable of enclosing the host-derived membrane, containing the virus-encoded membrane-associated proteins. The chain is Major capsid protein P3 (III) from Acinetobacter calcoaceticus (Arthrobacter siderocapsulatus).